Here is a 349-residue protein sequence, read N- to C-terminus: Peroxidase 22 (349 aa).

The first 29 residues, Met1–Ala29, serve as a signal peptide directing secretion. Residue Gln30 is modified to Pyrrolidone carboxylic acid. Intrachain disulfides connect Cys40/Cys120, Cys73/Cys78, Cys126/Cys329, and Cys206/Cys238. The active-site Proton acceptor is His71. Asp72, Val75, Gly77, Asp79, and Ser81 together coordinate Ca(2+). Asn86 carries an N-linked (GlcNAc...) asparagine glycan. A substrate-binding site is contributed by Pro168. N-linked (GlcNAc...) asparagine glycosylation is found at Asn173 and Asn187. Residue His199 coordinates heme b. Thr200 contacts Ca(2+). N-linked (GlcNAc...) asparagine glycans are attached at residues Asn217 and Asn243. Ca(2+) contacts are provided by Asp251, Thr254, and Asp259.

It belongs to the peroxidase family. Classical plant (class III) peroxidase subfamily. The cofactor is heme b. Ca(2+) serves as cofactor. In terms of tissue distribution, mainly expressed in roots.

It is found in the secreted. Its subcellular location is the vacuole. It carries out the reaction 2 a phenolic donor + H2O2 = 2 a phenolic radical donor + 2 H2O. In terms of biological role, removal of H(2)O(2), oxidation of toxic reductants, biosynthesis and degradation of lignin, suberization, auxin catabolism, response to environmental stresses such as wounding, pathogen attack and oxidative stress. These functions might be dependent on each isozyme/isoform in each plant tissue. The polypeptide is Peroxidase 22 (PER22) (Arabidopsis thaliana (Mouse-ear cress)).